Reading from the N-terminus, the 678-residue chain is uncharacterized protein (678 aa).

Residues 1 to 26 (MGVHFDDNANTTWEATDPGVSSDCDG) are disordered. Helical transmembrane passes span 119 to 139 (LLLL…LIYP), 245 to 265 (SFPC…GGCT), 317 to 337 (AAVV…YDSI), 340 to 360 (YWIN…PPLL), 371 to 391 (ELFS…YVVW), 405 to 425 (IAKV…NVTF), 443 to 463 (GALT…VIQA), 475 to 495 (YFKI…LPGL), and 519 to 539 (AYLF…RWDF).

Its subcellular location is the vacuole membrane. This is an uncharacterized protein from Saccharomyces cerevisiae (strain ATCC 204508 / S288c) (Baker's yeast).